The primary structure comprises 117 residues: uncharacterized protein (117 aa).

Residues Val-10–Val-32 traverse the membrane as a helical segment.

It localises to the membrane. This is an uncharacterized protein from Rickettsia conorii (strain ATCC VR-613 / Malish 7).